The primary structure comprises 422 residues: MPVLGIITEYNPFHNGHLYHLNQARTITDSNAVICIMNGNFVQRGEPALIDKWARTRMALKNGVDLIIELPLIYGIRSAEYFAYGAVTLLEETKTVDYLVFGSESGNTDILKVVARILYEEPHNFKQYLKKYISQGLSFPRAREKALLKYVQQTDNIPYSVNEIADVIKQPNNILGIEYIKALFRINSTIKPVAIRRKGKGYHSHSLETKITSATAIRKGIYEQGLNSVKQAITPVTYKILKEEFENGKGPVQKQLLQHAILAELRKLTPEKIRQYEGVKNGLEYRFLEAAHNSGTLTGLIENIKNKNLTWTRIQRTLLHILFNIREKDFRILDKKGPRYFRVLGFNKKGEKLLSKIKQNSRLPLITHLKPHLKQVNRNSLNLLEKSLSYDVLSSDMYSLLYPDPSKRRGRKDFLIPVIKNI.

Residues Ile-7–His-20, Gly-102, Asn-172, and Arg-197 contribute to the ATP site.

Belongs to the TmcAL family.

It localises to the cytoplasm. It catalyses the reaction cytidine(34) in elongator tRNA(Met) + acetate + ATP = N(4)-acetylcytidine(34) in elongator tRNA(Met) + AMP + diphosphate. In terms of biological role, catalyzes the formation of N(4)-acetylcytidine (ac(4)C) at the wobble position of elongator tRNA(Met), using acetate and ATP as substrates. First activates an acetate ion to form acetyladenylate (Ac-AMP) and then transfers the acetyl group to tRNA to form ac(4)C34. The polypeptide is tRNA(Met) cytidine acetate ligase (Halothermothrix orenii (strain H 168 / OCM 544 / DSM 9562)).